Reading from the N-terminus, the 179-residue chain is Putative DUP240 protein DFP1 (179 aa).

The next 2 membrane-spanning stretches (helical) occupy residues 4 to 24 (FLLF…SGVL) and 26 to 46 (PAMV…IWSF).

The protein belongs to the DUP/COS family.

It is found in the membrane. In Saccharomyces cerevisiae (strain ATCC 204508 / S288c) (Baker's yeast), this protein is Putative DUP240 protein DFP1.